We begin with the raw amino-acid sequence, 855 residues long: DNA mismatch repair protein MutS (855 aa).

Residue 616 to 623 coordinates ATP; that stretch reads GPNMGGKS.

Belongs to the DNA mismatch repair MutS family.

Its function is as follows. This protein is involved in the repair of mismatches in DNA. It is possible that it carries out the mismatch recognition step. This protein has a weak ATPase activity. This is DNA mismatch repair protein MutS from Salmonella gallinarum (strain 287/91 / NCTC 13346).